A 169-amino-acid chain; its full sequence is Disulfide bond formation protein B (169 aa).

The Cytoplasmic segment spans residues 1–14 (MMRFLNHCSQGRSA). The chain crosses the membrane as a helical span at residues 15–31 (WLLMILTALILESSALY). At 32–49 (FQHVMKLQPCVMCIYERV) the chain is on the periplasmic side. C41 and C44 are joined by a disulfide. The chain crosses the membrane as a helical span at residues 50–65 (ALFGVLSAGILGVIAP). At 66–71 (KTPLRW) the chain is on the cytoplasmic side. A helical membrane pass occupies residues 72 to 89 (LAIILWIYSAWGGLQLAW). Over 90-144 (QHTMMQLHPSPFNTCDFFVNFPSWLALNQWLPSVFEATGDCSVRQWQFLTLEMPQ) the chain is Periplasmic. A disulfide bond links C104 and C130. The chain crosses the membrane as a helical span at residues 145–163 (WLVGIFAAYLVVAALVLIS). Over 164–169 (QFFSRK) the chain is Cytoplasmic.

This sequence belongs to the DsbB family.

The protein resides in the cell inner membrane. In terms of biological role, required for disulfide bond formation in some periplasmic proteins. Acts by oxidizing the DsbA protein. The protein is Disulfide bond formation protein B of Photorhabdus laumondii subsp. laumondii (strain DSM 15139 / CIP 105565 / TT01) (Photorhabdus luminescens subsp. laumondii).